We begin with the raw amino-acid sequence, 208 residues long: Large ribosomal subunit protein bL25 (208 aa).

This sequence belongs to the bacterial ribosomal protein bL25 family. CTC subfamily. As to quaternary structure, part of the 50S ribosomal subunit; part of the 5S rRNA/L5/L18/L25 subcomplex. Contacts the 5S rRNA. Binds to the 5S rRNA independently of L5 and L18.

In terms of biological role, this is one of the proteins that binds to the 5S RNA in the ribosome where it forms part of the central protuberance. The sequence is that of Large ribosomal subunit protein bL25 from Bartonella quintana (strain Toulouse) (Rochalimaea quintana).